Consider the following 97-residue polypeptide: Putative pterin-4-alpha-carbinolamine dehydratase (97 aa).

It belongs to the pterin-4-alpha-carbinolamine dehydratase family.

The enzyme catalyses (4aS,6R)-4a-hydroxy-L-erythro-5,6,7,8-tetrahydrobiopterin = (6R)-L-erythro-6,7-dihydrobiopterin + H2O. This Dinoroseobacter shibae (strain DSM 16493 / NCIMB 14021 / DFL 12) protein is Putative pterin-4-alpha-carbinolamine dehydratase.